The sequence spans 663 residues: UvrABC system protein B (663 aa).

In terms of domain architecture, Helicase ATP-binding spans 27 to 414 (KNIENGVKDQ…SDNHIAEQLI (388 aa)). ATP is bound at residue 40–47 (GVTGSGKT). Positions 93–116 (YYDYYQPEAYIKTTDTYIEKDSSV) match the Beta-hairpin motif. Positions 432 to 594 (QVDDLLDEIR…IDPKSIIKEI (163 aa)) constitute a Helicase C-terminal domain. The UVR domain maps to 624–659 (EKEITKLEKKIKKLVEELDFEQAIILRDEMLKLKEL).

It belongs to the UvrB family. Forms a heterotetramer with UvrA during the search for lesions. Interacts with UvrC in an incision complex.

The protein resides in the cytoplasm. In terms of biological role, the UvrABC repair system catalyzes the recognition and processing of DNA lesions. A damage recognition complex composed of 2 UvrA and 2 UvrB subunits scans DNA for abnormalities. Upon binding of the UvrA(2)B(2) complex to a putative damaged site, the DNA wraps around one UvrB monomer. DNA wrap is dependent on ATP binding by UvrB and probably causes local melting of the DNA helix, facilitating insertion of UvrB beta-hairpin between the DNA strands. Then UvrB probes one DNA strand for the presence of a lesion. If a lesion is found the UvrA subunits dissociate and the UvrB-DNA preincision complex is formed. This complex is subsequently bound by UvrC and the second UvrB is released. If no lesion is found, the DNA wraps around the other UvrB subunit that will check the other stand for damage. The sequence is that of UvrABC system protein B from Fusobacterium nucleatum subsp. nucleatum (strain ATCC 25586 / DSM 15643 / BCRC 10681 / CIP 101130 / JCM 8532 / KCTC 2640 / LMG 13131 / VPI 4355).